We begin with the raw amino-acid sequence, 272 residues long: Shikimate dehydrogenase (NADP(+)) (272 aa).

Shikimate contacts are provided by residues 14-16 (SKS) and Thr-61. Lys-65 (proton acceptor) is an active-site residue. The shikimate site is built by Asn-86 and Asp-102. NADP(+) contacts are provided by residues 126-130 (GAGGA), 149-154 (NRTFSK), Ser-189, and Met-213. Tyr-215 serves as a coordination point for shikimate. An NADP(+)-binding site is contributed by Gly-238.

Belongs to the shikimate dehydrogenase family. As to quaternary structure, homodimer.

It catalyses the reaction shikimate + NADP(+) = 3-dehydroshikimate + NADPH + H(+). It functions in the pathway metabolic intermediate biosynthesis; chorismate biosynthesis; chorismate from D-erythrose 4-phosphate and phosphoenolpyruvate: step 4/7. Involved in the biosynthesis of the chorismate, which leads to the biosynthesis of aromatic amino acids. Catalyzes the reversible NADPH linked reduction of 3-dehydroshikimate (DHSA) to yield shikimate (SA). The polypeptide is Shikimate dehydrogenase (NADP(+)) (Haemophilus influenzae (strain ATCC 51907 / DSM 11121 / KW20 / Rd)).